The chain runs to 286 residues: NAD kinase (286 aa).

The active-site Proton acceptor is Asp-67. Residues 67–68 (DG), Arg-72, 141–142 (ND), Arg-152, Asp-171, 182–187 (TAYSLS), and Gln-242 each bind NAD(+).

It belongs to the NAD kinase family. A divalent metal cation is required as a cofactor.

It is found in the cytoplasm. It carries out the reaction NAD(+) + ATP = ADP + NADP(+) + H(+). Its function is as follows. Involved in the regulation of the intracellular balance of NAD and NADP, and is a key enzyme in the biosynthesis of NADP. Catalyzes specifically the phosphorylation on 2'-hydroxyl of the adenosine moiety of NAD to yield NADP. The protein is NAD kinase of Ruminiclostridium cellulolyticum (strain ATCC 35319 / DSM 5812 / JCM 6584 / H10) (Clostridium cellulolyticum).